The chain runs to 183 residues: Interleukin-24 (183 aa).

Residues 1-28 (MQTSLRQQILPGLSLILLVLNQVPELQG) form the signal peptide. The cysteines at positions 36 and 83 are disulfide-linked. N76 carries an N-linked (GlcNAc...) asparagine glycan. A Glycyl lysine isopeptide (Lys-Gly) (interchain with G-Cter in ubiquitin) cross-link involves residue K99.

This sequence belongs to the IL-10 family. In terms of processing, glycosylated. Post-translationally, ubiquitination at Lys-99 promotes proteasomal degradation.

The protein localises to the secreted. Multifunctional cytokine mainly produced by T-cells that plays a regulatory role in immune response, tissue homeostasis, host defense, and oncogenesis. Possesses antiviral functions and induces the type I interferon response during influenza infection. Signals through two receptor complexes IL20RA/IL20RB or IL20RB/IL22RA1. In turn, stimulates the JAK1-STAT3 and MAPK pathways and promotes the secretion of pro-inflammatory mediators including IL8 and MMP1. Intracellularly, maintains endoplasmic reticulum homeostasis by restricting the eIF2alpha-CHOP pathway-mediated stress signal. In addition, acts as a quality control mechanism for the ubiquitin proteasome system by alerting the cell to proteasome dysfunction through activation of PKR/EIF2AK2. The polypeptide is Interleukin-24 (Il24) (Rattus norvegicus (Rat)).